We begin with the raw amino-acid sequence, 106 residues long: Large ribosomal subunit protein bL21 (106 aa).

Belongs to the bacterial ribosomal protein bL21 family. Part of the 50S ribosomal subunit. Contacts protein L20.

Its function is as follows. This protein binds to 23S rRNA in the presence of protein L20. The protein is Large ribosomal subunit protein bL21 of Xanthomonas campestris pv. campestris (strain ATCC 33913 / DSM 3586 / NCPPB 528 / LMG 568 / P 25).